The primary structure comprises 536 residues: Plasmepsin V (536 aa).

Residues 1 to 34 (MVGASLGPPGRGSLSRLIRLVICVLTLCALSVQG) form the signal peptide. At 35–492 (RSESTEGHSK…RKDNIFLKIP (458 aa)) the chain is on the lumenal side. One can recognise a Peptidase A1 domain in the interval 62-462 (YFLDIDIGTP…DIQKNRIGFV (401 aa)). Asp-80 is an active-site residue. Disulfide bonds link Cys-90-Cys-172, Cys-93-Cys-96, Cys-117-Cys-128, Cys-122-Cys-133, Cys-220-Cys-466, Cys-337-Cys-382, and Cys-391-Cys-427. Positions 244-258 (SKSVSGQGSGPVSES) are enriched in low complexity. The segment at 244–264 (SKSVSGQGSGPVSESLSESGE) is disordered. The active site involves Asp-313. A helical transmembrane segment spans residues 493–513 (FFYLYSLFVVFALSVLLSLVF). Residues 514-536 (YVRRLYHMEYSPLPSEGKAPADA) lie on the Cytoplasmic side of the membrane.

This sequence belongs to the peptidase A1 family. In terms of assembly, component of a complex composed of SPC25 and PMV; the interaction is mediated via the transmembrane domains. The complex interacts with the SEC61 channel-forming translocon complex and is involved in the recognition and import of PEXEL motif-containing proteins into the ER for subsequent export. Post-translationally, it is not clear if the zymogen has a cleavable propeptide. Cleavage of the putative propeptide is dispensable for catalytic activity.

It localises to the endoplasmic reticulum membrane. Its activity is regulated as follows. Inhibited by peptidomimetic inhibitors such as WEHI-842. During the asexual blood stage, plays an essential role in the export of several proteins into the host erythrocytes by cleaving the pentameric localization motif RxLxE/Q/D (termed Plasmodium export element (PEXEL)) located downstream of the N-terminal secretory signal sequence. Specifically, cleaves after the leucine residue in the RxLxE/Q/D (or RxLxxE) motif of exported proteins including EMP1. Also, by regulating protein export, plays an essential role in gametocyte development and thus parasite transmission to the mosquito vector. The sequence is that of Plasmepsin V from Plasmodium vivax (strain Salvador I).